The primary structure comprises 365 residues: Aminomethyltransferase (365 aa).

This sequence belongs to the GcvT family. In terms of assembly, the glycine cleavage system is composed of four proteins: P, T, L and H.

The catalysed reaction is N(6)-[(R)-S(8)-aminomethyldihydrolipoyl]-L-lysyl-[protein] + (6S)-5,6,7,8-tetrahydrofolate = N(6)-[(R)-dihydrolipoyl]-L-lysyl-[protein] + (6R)-5,10-methylene-5,6,7,8-tetrahydrofolate + NH4(+). Functionally, the glycine cleavage system catalyzes the degradation of glycine. This chain is Aminomethyltransferase, found in Yersinia pestis bv. Antiqua (strain Antiqua).